A 273-amino-acid polypeptide reads, in one-letter code: Large ribosomal subunit protein uL2 (273 aa).

The interval 228–273 is disordered; that stretch reads IDHPHGGGEGKTSGGRHPVTPWGFSTKGKKTRKNKRTSKFIVKKRK. Residues 254 to 273 are compositionally biased toward basic residues; that stretch reads KGKKTRKNKRTSKFIVKKRK.

Belongs to the universal ribosomal protein uL2 family. In terms of assembly, part of the 50S ribosomal subunit. Forms a bridge to the 30S subunit in the 70S ribosome.

In terms of biological role, one of the primary rRNA binding proteins. Required for association of the 30S and 50S subunits to form the 70S ribosome, for tRNA binding and peptide bond formation. It has been suggested to have peptidyltransferase activity; this is somewhat controversial. Makes several contacts with the 16S rRNA in the 70S ribosome. This Rickettsia typhi (strain ATCC VR-144 / Wilmington) protein is Large ribosomal subunit protein uL2.